The following is a 757-amino-acid chain: Probable ubiquitin carboxyl-terminal hydrolase MINDY-4 (757 aa).

2 disordered regions span residues 152–173 (FVSSKRPPHKSKPMQTVPGETP) and 190–334 (SLDV…LPGG). Basic and acidic residues predominate over residues 190–201 (SLDVKRMGENSR). Phosphoserine occurs at positions 219 and 223. Positions 232–242 (SSPSSSSTQPQ) are enriched in low complexity. A compositionally biased stretch (polar residues) spans 254–277 (CTQQDILASSNSSPSRTSLGQLSE). Phosphoserine is present on Ser-289. Basic and acidic residues predominate over residues 299–310 (PPWDRARPRDPS). The active-site Nucleophile is Cys-456. Residue His-677 is the Proton acceptor of the active site.

It belongs to the MINDY deubiquitinase family. FAM188 subfamily.

The catalysed reaction is Thiol-dependent hydrolysis of ester, thioester, amide, peptide and isopeptide bonds formed by the C-terminal Gly of ubiquitin (a 76-residue protein attached to proteins as an intracellular targeting signal).. In terms of biological role, probable hydrolase that can remove 'Lys-48'-linked conjugated ubiquitin from proteins. In Homo sapiens (Human), this protein is Probable ubiquitin carboxyl-terminal hydrolase MINDY-4.